We begin with the raw amino-acid sequence, 277 residues long: Sulfate transport system permease protein CysT (277 aa).

The next 7 helical transmembrane spans lie at 17-37 (LGTS…ALVM), 64-84 (LLSA…MAWI), 99-119 (LMDL…ASLF), 136-156 (VTYT…PFVV), 185-205 (FCKV…ALSF), 215-235 (VIFI…MIFV), and 243-263 (PAAS…LFSI). The ABC transmembrane type-1 domain occupies 60–263 (YKVTLLSAFV…AASLLLLFSI (204 aa)).

This sequence belongs to the binding-protein-dependent transport system permease family. CysTW subfamily. As to quaternary structure, the complex is composed of two ATP-binding proteins (CysA), two transmembrane proteins (CysT and CysW) and a solute-binding protein (CysP).

Its subcellular location is the cell inner membrane. Functionally, part of the ABC transporter complex CysAWTP (TC 3.A.1.6.1) involved in sulfate/thiosulfate import. Probably responsible for the translocation of the substrate across the membrane. The protein is Sulfate transport system permease protein CysT (cysU) of Escherichia coli (strain K12).